Consider the following 167-residue polypeptide: MITDILAMNLQVVFCGINPGLSTAHHGYHFANPNNRFWKVIHQAGFTERLLTPAEEQHLLDTGCGITMLVERPTVEATELGRDELLQGGNAIVEKMTRYQPRALAVLGKQAFSQAFGIKKVSWGRQERRIGETQVWVLPNPSGLNRATLESLVASYQELHQALQDNV.

Belongs to the uracil-DNA glycosylase (UDG) superfamily. TDG/mug family. Binds DNA as a monomer.

Its subcellular location is the cytoplasm. It catalyses the reaction Specifically hydrolyzes mismatched double-stranded DNA and polynucleotides, releasing free uracil.. Excises ethenocytosine and uracil, which can arise by alkylation or deamination of cytosine, respectively, from the corresponding mispairs with guanine in ds-DNA. It is capable of hydrolyzing the carbon-nitrogen bond between the sugar-phosphate backbone of the DNA and the mispaired base. The complementary strand guanine functions in substrate recognition. Required for DNA damage lesion repair in stationary-phase cells. The chain is G/U mismatch-specific DNA glycosylase from Pectobacterium atrosepticum (strain SCRI 1043 / ATCC BAA-672) (Erwinia carotovora subsp. atroseptica).